A 911-amino-acid chain; its full sequence is Inter-alpha-trypsin inhibitor heavy chain H1 (911 aa).

The N-terminal stretch at 1 to 27 (MDGAMGPRGLLLCMYLVSLLILQAMPA) is a signal peptide. The propeptide occupies 28–34 (LGSATGR). A VIT domain is found at 37–166 (SSEKRQAVDT…KVTFQLTYEE (130 aa)). A glycan (S-linked (Hex...) cysteine) is linked at C60. Position 129 is a phosphoserine (S129). The Phagocytosis uptake signal motif lies at 181 to 184 (VKPK). Disulfide bonds link C244-C247 and C268-C540. N285 carries N-linked (GlcNAc...) (complex) asparagine glycosylation. The 161-residue stretch at 290-450 (NKNVVFVIDI…FNFLEVMSME (161 aa)) folds into the VWFA domain. The interval 387–911 (SLPELSNHAS…YTDYIVPDIF (525 aa)) is hyaluronan-binding. Phosphothreonine is present on residues T402 and T407. N-linked (GlcNAc...) (complex) asparagine glycosylation is present at N588. An O-linked (GalNAc...) threonine glycan is attached at T653. D672 is subject to Aspartate 1-(chondroitin 4-sulfate)-ester. Residues 673–911 (PHFIIHVPQK…YTDYIVPDIF (239 aa)) constitute a propeptide that is removed on maturation. N-linked (GlcNAc...) asparagine glycosylation occurs at N750.

Belongs to the ITIH family. I-alpha-I plasma protease inhibitors are assembled from one or two heavy chains (HC) and one light chain, bikunin. Inter-alpha-inhibitor (I-alpha-I) is composed of ITIH1/HC1, ITIH2/HC2 and bikunin. Interacts with TNFAIP6 (via Link and CUB domains). In terms of processing, heavy chains are linked to bikunin via chondroitin 4-sulfate esterified to the alpha-carboxyl of the C-terminal aspartate after propeptide cleavage. Post-translationally, the S-linked glycan is composed of two 6-carbon sugars, possibly Glc or Gal.

The protein localises to the secreted. Functionally, may act as a carrier of hyaluronan in serum or as a binding protein between hyaluronan and other matrix protein, including those on cell surfaces in tissues to regulate the localization, synthesis and degradation of hyaluronan which are essential to cells undergoing biological processes. In terms of biological role, contains a potential peptide which could stimulate a broad spectrum of phagocytotic cells. This chain is Inter-alpha-trypsin inhibitor heavy chain H1 (ITIH1), found in Homo sapiens (Human).